A 3230-amino-acid polypeptide reads, in one-letter code: Helicase SRCAP (3230 aa).

The disordered stretch occupies residues 1–71 (MQSSPSPAHP…GPPDGATVPL (71 aa)). Over residues 26 to 41 (GSNPVSPASSSSPASS) the composition is skewed to low complexity. Residues 124–196 (LPKVPEPPRP…EQAKLRRIAS (73 aa)) form the HSA domain. 2 disordered regions span residues 253–547 (QPLT…EEDD) and 559–581 (EEQS…LGPK). Positions 257 to 273 (SSKAGSSPCLGSSSAAS) are enriched in low complexity. Residues 283–313 (DDEDGDFQPQEDEEEDDEETIEVEEQQEGND) show a composition bias toward acidic residues. Residues 315 to 329 (EAQRREIELLRREGE) are compositionally biased toward basic and acidic residues. A compositionally biased stretch (low complexity) spans 337-356 (RSLPPQLLEGPSSPSQTPSS). Over residues 397-425 (DEDDEEFTANEEEAEDEEDTIAAEEQLEG) the composition is skewed to acidic residues. Positions 426–441 (EVDHAMELSELAREGE) are enriched in basic and acidic residues. Acidic residues-rich tracts occupy residues 462–490 (SEDE…EPPQ), 503–517 (RSED…EEET), and 524–533 (EESESEESED). Residues 630–795 (VTMYEKKLNG…WSLMHFLMPH (166 aa)) enclose the Helicase ATP-binding domain. 643–650 (DEMGLGKT) is an ATP binding site. Disordered stretches follow at residues 1017-1045 (APLG…PQVL), 1058-1125 (PPLI…PGSS), and 1138-1166 (TFPP…TPAP). Pro residues-rich tracts occupy residues 1018–1030 (PLGP…PPGP) and 1058–1076 (PPLI…PPLQ). Over residues 1093–1107 (LSGTSRPPTPTLSLK) the composition is skewed to low complexity. Pro residues predominate over residues 1108–1123 (PTPPAPVRLSPAPPPG). Residues 1138–1160 (TFPPAAATTTSTTTATATTTAVP) are compositionally biased toward low complexity. Ser1172 carries the phosphoserine modification. Disordered regions lie at residues 1320–1366 (GLTP…APMP), 1406–1425 (SLPG…PLAS), 1629–1760 (VPVM…ASPV), and 1839–1893 (SRLP…EEKR). Pro residues predominate over residues 1323–1336 (PVPPLAPAPRPPSS). The span at 1337–1360 (GLPAVLNPRPTLTPGRLPTPTLGT) shows a compositional bias: low complexity. The span at 1675-1691 (PASTQTLALAPALAPTL) shows a compositional bias: low complexity. Positions 1692–1733 (GGSSPSQTLSLGTGNPQGPFPTQTLSLTPASSLVPTPAQTLS) are enriched in polar residues. Pro residues predominate over residues 1750-1760 (PAPPLAPASPV). Positions 2044-2197 (KLQTLAVLLR…DMAIEGGNFT (154 aa)) constitute a Helicase C-terminal domain. 6 disordered regions span residues 2214-2233 (LEEP…EETV), 2271-2298 (FNEN…MSRA), 2327-2453 (VSRE…APAA), 2564-2583 (LELA…VPPK), 2598-3081 (KNLS…GRKS), and 3095-3230 (DLAD…KAKT). The span at 2215–2225 (EEPSSSSVPSA) shows a compositional bias: low complexity. Composition is skewed to basic and acidic residues over residues 2284 to 2298 (EAGR…MSRA), 2327 to 2358 (VSRE…RLPQ), and 2386 to 2403 (KAPE…RGAR). The span at 2438–2448 (RPAPRPRPTPA) shows a compositional bias: pro residues. Composition is skewed to low complexity over residues 2564–2579 (LELA…SLSL) and 2600–2611 (LSLTPSAPSLTL). The segment covering 2669 to 2679 (EADRTSEELTE) has biased composition (basic and acidic residues). A compositionally biased stretch (low complexity) spans 2694 to 2712 (VTAEVAAPSTSSSATSSPE). Residues 2782–2794 (SETSASPGSPSVR) show a composition bias toward polar residues. A compositionally biased stretch (low complexity) spans 2807–2817 (GPCEAAPSSSL). The segment covering 2856-2868 (VKRRRGRPPKKNR) has biased composition (basic residues). Residues 2857–2869 (KRRRGRPPKKNRS) constitute a DNA-binding region (a.T hook 1). Pro residues predominate over residues 2913-2926 (IPGPQPLGPQPVHR). A DNA-binding region (a.T hook 2) is located at residues 2936 to 2948 (KRRRGRPPKARDL). The span at 2953–2965 (TISSAGDGNSESR) shows a compositional bias: polar residues. The span at 2967–2982 (QPPPHPSPLTPLPPLL) shows a compositional bias: pro residues. Low complexity predominate over residues 2983-3002 (VCPTATVANTVTTVTISTSP). The a.T hook 3 DNA-binding region spans 3004–3016 (KRKRGRPPKNPPS). A compositionally biased stretch (pro residues) spans 3011-3020 (PKNPPSPRPS). Positions 3044 to 3053 (PQGQGESEGS) are enriched in low complexity. The span at 3168–3184 (SVEESEAEASGEEEEGD) shows a compositional bias: acidic residues.

Belongs to the SNF2/RAD54 helicase family. SWR1 subfamily. As to quaternary structure, interacts with CREBBP and EP300. May be part of a complex containing SRCAP, CREBBP, CARM1 and GRIP1. Component of the chromatin-remodeling SRCAP complex composed of at least SRCAP, DMAP1, RUVBL1, RUVBL2, ACTL6A, YEATS4, VPS72, ACTR6 and ZNHIT1. Component of a NuA4-related complex which contains EP400, TRRAP/PAF400, SRCAP, BRD8/SMAP, EPC1, DMAP1/DNMAP1, RUVBL1/TIP49, RUVBL2, actin, ACTL6A/BAF53A, VPS72 and YEATS4/GAS41. In terms of assembly, (Microbial infection) Interacts with hepatitis C virus (HCV) NS5A. (Microbial infection) Interacts with human adenovirus 2 DBP.

The protein resides in the nucleus. Its function is as follows. Catalytic component of the SRCAP complex which mediates the ATP-dependent exchange of histone H2AZ/H2B dimers for nucleosomal H2A/H2B, leading to transcriptional regulation of selected genes by chromatin remodeling. Acts as a coactivator for CREB-mediated transcription, steroid receptor-mediated transcription, and Notch-mediated transcription. The polypeptide is Helicase SRCAP (SRCAP) (Homo sapiens (Human)).